Reading from the N-terminus, the 509-residue chain is Anaerobic nitric oxide reductase flavorubredoxin (509 aa).

The zinc metallo-hydrolase stretch occupies residues 30 to 210; that stretch reads LQGSSYNSYL…PFSRLVTAKI (181 aa). Positions 79, 81, 83, 147, 166, and 227 each coordinate Fe cation. The Flavodoxin-like domain maps to 254–393; that stretch reads ITLFYDTMSN…VCREHGREIA (140 aa). FMN-binding positions include 260 to 264 and 342 to 369; these read TMSNN and AFGSYGWNGGAVDRVQTRLMDAGFETTL. One can recognise a Rubredoxin-like domain in the interval 457 to 508; the sequence is SGCMQCSVCQWIYDPALGEPMQDVTPGTMWSDVPDSFLCPECGLGKDVFNPI. Fe cation contacts are provided by Cys-462, Cys-465, Cys-495, and Cys-498.

It in the N-terminal section; belongs to the zinc metallo-hydrolase group 3 family. As to quaternary structure, homotetramer. Fe cation is required as a cofactor. It depends on FMN as a cofactor.

It localises to the cytoplasm. It participates in nitrogen metabolism; nitric oxide reduction. Anaerobic nitric oxide reductase; uses NADH to detoxify nitric oxide (NO), protecting several 4Fe-4S NO-sensitive enzymes. Has at least 2 reductase partners, only one of which (NorW, flavorubredoxin reductase) has been identified. NO probably binds to the di-iron center; electrons enter from the NorW at rubredoxin and are transferred sequentially to the FMN center and the di-iron center. Also able to function as an aerobic oxygen reductase. This is Anaerobic nitric oxide reductase flavorubredoxin from Pectobacterium atrosepticum (strain SCRI 1043 / ATCC BAA-672) (Erwinia carotovora subsp. atroseptica).